The chain runs to 638 residues: Broad-specificity ulvan lyase (638 aa).

The signal sequence occupies residues 1 to 27; sequence MKRRNFIQLSSLATIGMSLPSAGIVNA.

Belongs to the polysaccharide lyase 37 family.

It is found in the periplasm. It catalyses the reaction Endolytic cleavage of (1-&gt;4)-beta-galactosaminic bonds between N-acetylgalactosamine and either D-glucuronic acid or L-iduronic acid to produce a mixture of Delta(4)-unsaturated oligosaccharides of different sizes that are ultimately degraded to Delta(4)-unsaturated tetra- and disaccharides.. The enzyme catalyses Elimination of sulfate, appears to act on linkages between N-acetyl-D-glucosamine and uronate. Product is an unsaturated sugar.. Functionally, broad-specificity lyase involved in ulvan degradation. Ulvan is the main polysaccharide component of the Ulvales (green seaweed) cell wall. It is composed of disaccharide building blocks comprising 3-sulfated rhamnose (Rha3S) linked to D-glucuronic acid (GlcA), L-iduronic acid (IduA), or D-xylose (Xyl). Ulvan lyase catalyzes the endolytic cleavage of the glycosidic bond between Rha3S and the uronic acids GlcA or IduA, producing oligosaccharides that have unsaturated 4-deoxy-L-threo-hex-4-enopyranosiduronic acid (deltaUA) at the non-reducing end. This results eventually in the degradation of the ulvan polysaccharide into deltaUA-Rha3S disaccharides and deltaUA-Rha3S-Xyl-Rha3S tetrasaccharides. It is also able to degrade the glycosaminoglycans heparan sulfate and chondroitin sulfate. Not active against pectin, xanthan or alginate. In Formosa agariphila (strain DSM 15362 / KCTC 12365 / LMG 23005 / KMM 3901 / M-2Alg 35-1), this protein is Broad-specificity ulvan lyase.